Reading from the N-terminus, the 356-residue chain is Cyanide hydratase (356 aa).

The region spanning 6 to 285 (YKAAAVTSEP…DGLLFVDIDL (280 aa)) is the CN hydrolase domain. The active-site Proton acceptor is E46. The active site involves K128. C163 (nucleophile) is an active-site residue.

It belongs to the carbon-nitrogen hydrolase superfamily. Nitrilase family. Oligomer of dimers, forming left-handed helical fibers.

The enzyme catalyses formamide = hydrogen cyanide + H2O. Functionally, catalyzes the hydration of cyanide to formamide. Degradation of cyanide may be important for plant pathogenic fungi in infection of cyanogenic plants. The polypeptide is Cyanide hydratase (Leptosphaeria maculans (Blackleg fungus)).